We begin with the raw amino-acid sequence, 554 residues long: U3 small nucleolar RNA-associated protein 7 (554 aa).

The segment covering 1–12 has biased composition (basic residues); sequence MGHKKNGHRRQI. The disordered stretch occupies residues 1-39; the sequence is MGHKKNGHRRQIKERENQNKFERSTYTNNAKNNHTQTKD. Residues 13 to 23 show a composition bias toward basic and acidic residues; the sequence is KERENQNKFER. A compositionally biased stretch (polar residues) spans 24–35; the sequence is STYTNNAKNNHT. WD repeat units lie at residues 108–149, 230–269, 272–311, and 314–351; these read LKEF…AELF, TKAG…PLVK, SARG…QLHS, and SLPT…SGDS. The tract at residues 475–496 is disordered; that stretch reads NKAKTNSDIPDVKPDVKGKNSG.

In terms of assembly, interacts with snoRNA U3. Interacts with MPP10. Component of the ribosomal small subunit (SSU) processome composed of at least 40 protein subunits and snoRNA U3.

It localises to the nucleus. The protein localises to the nucleolus. Its function is as follows. Involved in nucleolar processing of pre-18S ribosomal RNA. The polypeptide is U3 small nucleolar RNA-associated protein 7 (UTP7) (Saccharomyces cerevisiae (strain ATCC 204508 / S288c) (Baker's yeast)).